We begin with the raw amino-acid sequence, 122 residues long: Large ribosomal subunit protein uL14 (122 aa).

This sequence belongs to the universal ribosomal protein uL14 family. In terms of assembly, part of the 50S ribosomal subunit. Forms a cluster with proteins L3 and L19. In the 70S ribosome, L14 and L19 interact and together make contacts with the 16S rRNA in bridges B5 and B8.

In terms of biological role, binds to 23S rRNA. Forms part of two intersubunit bridges in the 70S ribosome. This is Large ribosomal subunit protein uL14 from Syntrophus aciditrophicus (strain SB).